Here is a 383-residue protein sequence, read N- to C-terminus: Homoserine O-succinyltransferase (383 aa).

One can recognise an AB hydrolase-1 domain in the interval 51–361; the sequence is NALLICHALS…ESDFGHDAFL (311 aa). The active-site Nucleophile is the serine 157. Residue arginine 227 coordinates substrate. Residues aspartate 324 and histidine 357 contribute to the active site. Residue aspartate 358 coordinates substrate.

Belongs to the AB hydrolase superfamily. MetX family. Homodimer.

It localises to the cytoplasm. The catalysed reaction is L-homoserine + succinyl-CoA = O-succinyl-L-homoserine + CoA. It participates in amino-acid biosynthesis; L-methionine biosynthesis via de novo pathway; O-succinyl-L-homoserine from L-homoserine: step 1/1. Functionally, transfers a succinyl group from succinyl-CoA to L-homoserine, forming succinyl-L-homoserine. This chain is Homoserine O-succinyltransferase, found in Teredinibacter turnerae (strain ATCC 39867 / T7901).